The sequence spans 601 residues: Glutathione-regulated potassium-efflux system protein KefB (601 aa).

Helical transmembrane passes span 4–24, 29–49, 55–75, 87–107, 115–135, 152–172, 177–197, 207–227, 230–250, 268–288, 291–311, 324–344, and 356–376; these read SDFL…VPLA, IGAV…GLGF, EILH…GLEL, IFGV…GLLM, AAVV…LQLM, VLLF…LLAG, HFDW…LIGG, FIAA…LVLG, LFMD…GVLL, GLLL…GVLY, LLWV…VLYL, MQFA…FSTA, and ALLL…MKLV. Residues 400-519 enclose the RCK N-terminal domain; sequence KPQVIVVGFG…AGVTQFSRET (120 aa).

This sequence belongs to the monovalent cation:proton antiporter 2 (CPA2) transporter (TC 2.A.37) family. KefB subfamily. Interacts with the regulatory subunit KefG.

It localises to the cell inner membrane. With respect to regulation, activated by adducts between glutathione and electrophiles. In terms of biological role, pore-forming subunit of a potassium efflux system that confers protection against electrophiles. Catalyzes K(+)/H(+) antiport. This Escherichia coli (strain K12) protein is Glutathione-regulated potassium-efflux system protein KefB.